Consider the following 576-residue polypeptide: Putative SPbeta prophage-derived single-strand DNA-specific exonuclease YorK (576 aa).

Position 473 is a phosphotyrosine (Tyr-473).

The protein belongs to the RecJ family.

In terms of biological role, putative single-stranded-DNA-specific exonuclease. This is Putative SPbeta prophage-derived single-strand DNA-specific exonuclease YorK (yorK) from Bacillus subtilis (strain 168).